Reading from the N-terminus, the 30-residue chain is Propionyl-CoA carboxylase alpha chain (30 aa).

A Biotin carboxylation domain is found at 1–30 (PKIRKVLVANRGEIAIRVMRTXKELGIATV).

Dodecamer composed of six biotin-containing alpha subunits and six beta subunits. The cofactor is Mg(2+). It depends on Mn(2+) as a cofactor. Biotin serves as cofactor.

It carries out the reaction propanoyl-CoA + hydrogencarbonate + ATP = (S)-methylmalonyl-CoA + ADP + phosphate + H(+). It functions in the pathway metabolic intermediate metabolism; propanoyl-CoA degradation; succinyl-CoA from propanoyl-CoA: step 1/3. Functionally, this is one of the 2 subunits of the biotin-dependent propionyl-CoA carboxylase (PCC), the enzyme catalyzing the carboxylation of propionyl-CoA/propanoyl-CoA to D-methylmalonyl-CoA/(S)-methylmalonyl-CoA. Within the holoenzyme, the alpha subunit catalyzes the ATP-dependent carboxylation of the biotin carried by the biotin carboxyl carrier (BCC) domain, while the beta subunit then transfers the carboxyl group from carboxylated biotin to propionyl-CoA. Propionyl-CoA carboxylase also carboxylates acetyl-CoA, butyryl-CoA and succinyl-CoA. The polypeptide is Propionyl-CoA carboxylase alpha chain (Myxococcus xanthus).